Reading from the N-terminus, the 196-residue chain is Putative NADH dehydrogenase/NAD(P)H nitroreductase Rpal_4764 (196 aa).

Belongs to the nitroreductase family. HadB/RutE subfamily. FMN is required as a cofactor.

This Rhodopseudomonas palustris (strain TIE-1) protein is Putative NADH dehydrogenase/NAD(P)H nitroreductase Rpal_4764.